The following is a 163-amino-acid chain: Globin CTT-Z (163 aa).

An N-terminal signal peptide occupies residues 1–16 (MKFFAVLALCIVGAIA). The Globin domain occupies 18-162 (PLTSDEAALV…VYTAVFQIVT (145 aa)). Heme b-binding residues include histidine 76 and histidine 111.

This sequence belongs to the globin family.

The protein is Globin CTT-Z (CTT-Z) of Chironomus thummi thummi (Midge).